The following is a 233-amino-acid chain: Ion-translocating oxidoreductase complex subunit E (233 aa).

6 helical membrane passes run 18-38 (ALVQ…ATNA), 39-59 (LGLG…VSAL), 69-89 (IPIY…LINA), 92-112 (FGLY…CIVI), 128-148 (ALDG…LGAL), and 182-202 (PFLL…LLAG).

The protein belongs to the NqrDE/RnfAE family. As to quaternary structure, the complex is composed of six subunits: RnfA, RnfB, RnfC, RnfD, RnfE and RnfG.

Its subcellular location is the cell inner membrane. Functionally, part of a membrane-bound complex that couples electron transfer with translocation of ions across the membrane. The chain is Ion-translocating oxidoreductase complex subunit E from Yersinia pseudotuberculosis serotype O:3 (strain YPIII).